Consider the following 478-residue polypeptide: MASTIKEALSVVSEDQSLFECAYGSPHLAKTEMTASSSSEYGQTSKMSPRVPQQDWLSQPPARVTIKMECNPNQVNGSRNSPDDCSVAKGGKMVSSSDNVGMNYGSYMEEKHIPPPNMTTNERRVIVPADPTLWSTDHVRQWLEWAVKEYGLPDVDILLFQNIDGKELCKMTKDDFQRLTPSYNADILLSHLHYLRETPLPHLTSDDVDKALQNSPRLMHARNTGGATFIFPNTSVYPEATQRITTRPDLPYEQARRSAWTSHSHPTQSKATQPSSSTVPKTEDQRPQLDPYQILGPTSSRLANPGSGQIQLWQFLLELLSDSSNSNCITWEGTNGEFKMTDPDEVARRWGERKSKPNMNYDKLSRALRYYYDKNIMTKVHGKRYAYKFDFHGIAQALQPHPPESSMYKYPSDLPYMSSYHAHPQKMNFVAPHPPALPVTSSSFFAAPNPYWNSPTGGIYPNTRLPAAHMPSHLGTYY.

The span at T34–M47 shows a compositional bias: polar residues. Disordered regions lie at residues T34–W56 and N73–M93. A PNT domain is found at I113 to P199. Residues Q242–A303 form a disordered region. The span at A259 to P280 shows a compositional bias: polar residues. The ETS DNA-binding region spans I310–D390.

Belongs to the ETS family. In terms of tissue distribution, expressed in mesoderm- and, to a lesser extent, in ectoderm-derived tissues.

The protein localises to the nucleus. Acts as a transcriptional activator. The chain is Transcriptional regulator Erg (ERG) from Gallus gallus (Chicken).